The sequence spans 565 residues: Sulfite reductase [NADPH] hemoprotein beta-component (565 aa).

[4Fe-4S] cluster is bound by residues Cys-429, Cys-435, Cys-474, and Cys-478. Siroheme is bound at residue Cys-478.

The protein belongs to the nitrite and sulfite reductase 4Fe-4S domain family. In terms of assembly, alpha(8)-beta(8). The alpha component is a flavoprotein, the beta component is a hemoprotein. The cofactor is siroheme. [4Fe-4S] cluster serves as cofactor.

It carries out the reaction hydrogen sulfide + 3 NADP(+) + 3 H2O = sulfite + 3 NADPH + 4 H(+). The protein operates within sulfur metabolism; hydrogen sulfide biosynthesis; hydrogen sulfide from sulfite (NADPH route): step 1/1. In terms of biological role, component of the sulfite reductase complex that catalyzes the 6-electron reduction of sulfite to sulfide. This is one of several activities required for the biosynthesis of L-cysteine from sulfate. This Shewanella loihica (strain ATCC BAA-1088 / PV-4) protein is Sulfite reductase [NADPH] hemoprotein beta-component.